The chain runs to 259 residues: AM-toxin biosynthesis protein 11 (259 aa).

The tract at residues 39-66 is disordered; it reads RRSRRRPEEESIQSLSKHVSTTTQPCPT. Positions 50–64 are enriched in polar residues; the sequence is IQSLSKHVSTTTQPC.

It participates in mycotoxin biosynthesis. Part of the gene clusters that mediate the biosynthesis of AM-toxins, host-selective toxins (HSTs) causing Alternaria blotch on apple, a worldwide distributed disease. AM-toxins are cyclic depsipeptides containing the 3 residues 2-hydroxy-isovaleric acid (2-HIV), dehydroalanine, L-alanine which are common for all 3 AM-toxins I to III. The fourth precursor is L-alpha-amino-methoxyphenyl-valeric acid (L-Amv) for AM-toxin I, L-alpha-amino-phenyl-valeric acid (L-Apv) for AM-toxin II, and L-alpha-amino-hydroxyphenyl-valeric acid (L-Ahv) for AM-toxin III. AM-toxins have two target sites for affecting susceptible apple cells; they cause invagination of the plasma membrane and electrolyte loss and chloroplast disorganization. The non-ribosomal peptide synthetase AMT1 contains 4 catalytic modules and is responsible for activation of each residue in AM-toxin. The aldo-keto reductase AMT2 catalyzes the conversion of 2-keto-isovaleric acid (2-KIV) to 2-hydroxy-isovaleric acid (2-HIV), one of the precursor residues incorporated by AMT1 during AM-toxin biosynthesis, by reduction of its ketone to an alcohol. The cytochrome P450 monooxygenase AMT3 and the thioesterase AMT4 are also important for AM-toxin production, but their exact function within the AM-toxin biosynthesis are not known yet. Up to 21 proteins (including AMT1 to AMT4) are predicted to be involved in AM-toxin biosynthesis since their expression ishighly up-regulated in AM-toxin-producing cultures. This is AM-toxin biosynthesis protein 11 from Alternaria alternata (Alternaria rot fungus).